The chain runs to 120 residues: Ribonuclease P protein component 2 (120 aa).

Belongs to the eukaryotic/archaeal RNase P protein component 2 family. As to quaternary structure, consists of a catalytic RNA component and at least 4-5 protein subunits.

It is found in the cytoplasm. The catalysed reaction is Endonucleolytic cleavage of RNA, removing 5'-extranucleotides from tRNA precursor.. In terms of biological role, part of ribonuclease P, a protein complex that generates mature tRNA molecules by cleaving their 5'-ends. The sequence is that of Ribonuclease P protein component 2 from Thermococcus gammatolerans (strain DSM 15229 / JCM 11827 / EJ3).